The sequence spans 246 residues: Pyridoxine 5'-phosphate synthase (246 aa).

Residue asparagine 12 coordinates 3-amino-2-oxopropyl phosphate. A 1-deoxy-D-xylulose 5-phosphate-binding site is contributed by 14-15 (DH). A 3-amino-2-oxopropyl phosphate-binding site is contributed by arginine 23. The active-site Proton acceptor is the histidine 48. Arginine 50 and histidine 55 together coordinate 1-deoxy-D-xylulose 5-phosphate. The active-site Proton acceptor is glutamate 75. A 1-deoxy-D-xylulose 5-phosphate-binding site is contributed by threonine 105. Catalysis depends on histidine 196, which acts as the Proton donor. Residues glycine 197 and 218-219 (GH) contribute to the 3-amino-2-oxopropyl phosphate site.

This sequence belongs to the PNP synthase family. As to quaternary structure, homooctamer; tetramer of dimers.

It localises to the cytoplasm. The enzyme catalyses 3-amino-2-oxopropyl phosphate + 1-deoxy-D-xylulose 5-phosphate = pyridoxine 5'-phosphate + phosphate + 2 H2O + H(+). Its pathway is cofactor biosynthesis; pyridoxine 5'-phosphate biosynthesis; pyridoxine 5'-phosphate from D-erythrose 4-phosphate: step 5/5. Its function is as follows. Catalyzes the complicated ring closure reaction between the two acyclic compounds 1-deoxy-D-xylulose-5-phosphate (DXP) and 3-amino-2-oxopropyl phosphate (1-amino-acetone-3-phosphate or AAP) to form pyridoxine 5'-phosphate (PNP) and inorganic phosphate. This is Pyridoxine 5'-phosphate synthase from Pseudomonas putida (strain W619).